A 127-amino-acid polypeptide reads, in one-letter code: Protein LLP homolog (127 aa).

Positions 1 to 21 are enriched in basic residues; it reads MAKSLRSKWKRKMRAEKRKKN. The segment at 1 to 24 is disordered; the sequence is MAKSLRSKWKRKMRAEKRKKNAPK. Glycyl lysine isopeptide (Lys-Gly) (interchain with G-Cter in SUMO2) cross-links involve residues Lys-65 and Lys-72. The span at 98 to 120 shows a compositional bias: basic residues; the sequence is RQRKRLKAKRERKKGKSKVKAMK. A disordered region spans residues 98 to 127; it reads RQRKRLKAKRERKKGKSKVKAMKAAKGLTW.

This sequence belongs to the learning-associated protein family. In terms of assembly, interacts with CTCF, MYO1C and with the transcriptional machinery, including RNA polymerase II and TBP.

The protein localises to the nucleus. The protein resides in the nucleolus. It localises to the chromosome. In terms of biological role, in hippocampal neurons, regulates dendritic and spine growth and synaptic transmission. The chain is Protein LLP homolog (LLPH) from Bos taurus (Bovine).